The chain runs to 361 residues: Phosphoserine aminotransferase (361 aa).

Arg42 contacts L-glutamate. Residues 76-77 (AT), Trp102, Thr152, Asp172, and Gln195 contribute to the pyridoxal 5'-phosphate site. The residue at position 196 (Lys196) is an N6-(pyridoxal phosphate)lysine. 237 to 238 (NT) lines the pyridoxal 5'-phosphate pocket.

The protein belongs to the class-V pyridoxal-phosphate-dependent aminotransferase family. SerC subfamily. As to quaternary structure, homodimer. The cofactor is pyridoxal 5'-phosphate.

It is found in the cytoplasm. The enzyme catalyses O-phospho-L-serine + 2-oxoglutarate = 3-phosphooxypyruvate + L-glutamate. It carries out the reaction 4-(phosphooxy)-L-threonine + 2-oxoglutarate = (R)-3-hydroxy-2-oxo-4-phosphooxybutanoate + L-glutamate. The protein operates within amino-acid biosynthesis; L-serine biosynthesis; L-serine from 3-phospho-D-glycerate: step 2/3. It participates in cofactor biosynthesis; pyridoxine 5'-phosphate biosynthesis; pyridoxine 5'-phosphate from D-erythrose 4-phosphate: step 3/5. Functionally, catalyzes the reversible conversion of 3-phosphohydroxypyruvate to phosphoserine and of 3-hydroxy-2-oxo-4-phosphonooxybutanoate to phosphohydroxythreonine. The sequence is that of Phosphoserine aminotransferase from Xanthomonas axonopodis pv. citri (strain 306).